Reading from the N-terminus, the 371-residue chain is DNA primase large subunit PriL (371 aa).

Residues C230, C301, C310, and C317 each contribute to the [4Fe-4S] cluster site. The segment at 337–371 (EREKEEGKEKGNEEKKEKREEHEKKNEKGNEIKEK) is disordered.

It belongs to the eukaryotic-type primase large subunit family. Heterodimer of a small subunit (PriS) and a large subunit (PriL). The cofactor is [4Fe-4S] cluster.

Its function is as follows. Regulatory subunit of DNA primase, an RNA polymerase that catalyzes the synthesis of short RNA molecules used as primers for DNA polymerase during DNA replication. Stabilizes and modulates the activity of the small subunit, increasing the rate of DNA synthesis, and conferring RNA synthesis capability. The DNA polymerase activity may enable DNA primase to also catalyze primer extension after primer synthesis. May also play a role in DNA repair. The protein is DNA primase large subunit PriL of Methanosarcina acetivorans (strain ATCC 35395 / DSM 2834 / JCM 12185 / C2A).